Here is a 198-residue protein sequence, read N- to C-terminus: MAQINPLPVPLGPWKITVYDQENFQGKRMEFTSSCANIMECGFDNIRSLKVECGGWIGYEHTSFCGQQFVLERGEYPRWDAWSGSNAYHIERLMSFRPICSANHKESKLVIFEKENFIGRQWEMCDDYPSLQAMGWVNNEVGSMKVQCGSWVCYQYPGYRGYQYILESDHHGGEYKHWREWGSHAQTFQIQSIRRIQQ.

Residues Met1–Pro13 form an N-terminal arm region. Beta/gamma crystallin 'Greek key' domains lie at Trp14–Cys53 and Gly54–Cys100. The connecting peptide stretch occupies residues Ser101–Glu106. 2 Beta/gamma crystallin 'Greek key' domains span residues Ser107 to Cys148 and Gly149 to Gln197.

It belongs to the beta/gamma-crystallin family. Homo/heterodimer, or complexes of higher-order. The structure of beta-crystallin oligomers seems to be stabilized through interactions between the N-terminal arms.

Its function is as follows. Crystallins are the dominant structural components of the vertebrate eye lens. The sequence is that of Beta-crystallin A1 from Rana temporaria (European common frog).